The sequence spans 842 residues: 9-beta-pimara-7,15-diene synthase, chloroplastic (842 aa).

Residues 1–56 (MASPMEAVARSSLVLAPRRRRALGLLPAAAAAAPFVLDCRRRHNGGMRRPHVSFAC) constitute a chloroplast transit peptide. Residues Asp591, Asp595, Asn735, Ser739, and Glu743 each coordinate Mg(2+). Positions 591–595 (DDFFD) match the DDXXD motif motif.

This sequence belongs to the terpene synthase family. Mg(2+) is required as a cofactor. In terms of tissue distribution, expressed in roots.

Its subcellular location is the plastid. It is found in the chloroplast. The enzyme catalyses 9alpha-copalyl diphosphate = 9beta-pimara-7,15-diene + diphosphate. Functionally, involved in the biosynthesis of momilactone A and B phytoalexins. Catalyzes the conversion of syn-copalyl diphosphate to the phytoalexin precursor syn-pimara-7,15-diene. This chain is 9-beta-pimara-7,15-diene synthase, chloroplastic, found in Oryza sativa subsp. japonica (Rice).